A 118-amino-acid chain; its full sequence is Small ribosomal subunit protein mS37 (118 aa).

In terms of domain architecture, CHCH spans 42-84 (EATCITEMSVMMACWKQNEFRDDACRKEIQGFLDCAARAQEAR). Short sequence motifs (cx9C motif) lie at residues 45-55 (CITEMSVMMAC) and 66-76 (CRKEIQGFLDC). Cystine bridges form between Cys45–Cys76 and Cys55–Cys66.

It belongs to the mitochondrion-specific ribosomal protein mS37 family. In terms of assembly, component of the mitochondrial small ribosomal subunit (mt-SSU). Mature mammalian 55S mitochondrial ribosomes consist of a small (28S) and a large (39S) subunit. The 28S small subunit contains a 12S ribosomal RNA (12S mt-rRNA) and 30 different proteins. The 39S large subunit contains a 16S rRNA (16S mt-rRNA), a copy of mitochondrial valine transfer RNA (mt-tRNA(Val)), which plays an integral structural role, and 52 different proteins.

Its subcellular location is the mitochondrion. The protein localises to the nucleus. The protein is Small ribosomal subunit protein mS37 (CHCHD1) of Homo sapiens (Human).